The chain runs to 802 residues: Copper-exporting P-type ATPase (802 aa).

HMA domains are found at residues 5 to 70 (KKTT…YGVA) and 72 to 138 (ETVE…YDAS). Cu(+)-binding residues include Cys-16, Cys-19, Cys-83, and Cys-86. Transmembrane regions (helical) follow at residues 161 to 181 (LIIS…HLFN), 192 to 212 (WFQF…FYVG), 224 to 244 (MDVL…YEMV), 256 to 276 (LYFE…YLEA), 411 to 431 (YFVP…ITLV), and 438 to 458 (PALV…LGLA). The 4-aspartylphosphate intermediate role is filled by Asp-495. The Mg(2+) site is built by Asp-690 and Asp-694. 2 consecutive transmembrane segments (helical) span residues 748-767 (LFWA…LGLL) and 771-790 (VAGA…ALRL).

It belongs to the cation transport ATPase (P-type) (TC 3.A.3) family. Type IB subfamily.

It is found in the cell membrane. The enzyme catalyses Cu(+)(in) + ATP + H2O = Cu(+)(out) + ADP + phosphate + H(+). Its function is as follows. Involved in copper export. The sequence is that of Copper-exporting P-type ATPase (copA) from Staphylococcus aureus (strain MW2).